The primary structure comprises 148 residues: Meiosis inducing protein mei3 (148 aa).

Positions M1–P20 are enriched in polar residues. The interval M1–E96 is disordered. Over residues N21–K46 the composition is skewed to low complexity. Residues P75 to P86 are compositionally biased toward basic residues.

Its function is as follows. Acts as a critical meiotic inducer by binding non-covalently to protein kinase ran1/pat1 inhibiting its enzymatic activity. Inhibits ran1/pat1 by acting as a pseudosubstrate for ran1/pat1 instead of its natural substrate ste11. Inactivation of the ran1/pat1 protein kinase is both necessary and sufficient to divert a vegetative cell from mitotic division to meiotic differentiation. This is Meiosis inducing protein mei3 from Schizosaccharomyces pombe (strain 972 / ATCC 24843) (Fission yeast).